The primary structure comprises 261 residues: Na(+)-translocating NADH-quinone reductase subunit C (261 aa).

The helical transmembrane segment at 12-32 (LGVVIGLSLVCSIIVSTAAVG) threads the bilayer. T229 carries the post-translational modification FMN phosphoryl threonine.

Belongs to the NqrC family. As to quaternary structure, composed of six subunits; NqrA, NqrB, NqrC, NqrD, NqrE and NqrF. The cofactor is FMN.

Its subcellular location is the cell inner membrane. The enzyme catalyses a ubiquinone + n Na(+)(in) + NADH + H(+) = a ubiquinol + n Na(+)(out) + NAD(+). Functionally, NQR complex catalyzes the reduction of ubiquinone-1 to ubiquinol by two successive reactions, coupled with the transport of Na(+) ions from the cytoplasm to the periplasm. NqrA to NqrE are probably involved in the second step, the conversion of ubisemiquinone to ubiquinol. This chain is Na(+)-translocating NADH-quinone reductase subunit C, found in Vibrio parahaemolyticus serotype O3:K6 (strain RIMD 2210633).